Reading from the N-terminus, the 88-residue chain is MSIMDHSPTTGVVTVIVILIAIAALGALILGCWCYLRLQRISQSEDEESIVGDGETKEPFLLVQYSAKGPCVERKAKLMTPNGPEVHG.

Residues methionine 1–threonine 10 lie on the Mitochondrial intermembrane side of the membrane. The chain crosses the membrane as a helical span at residues glycine 11–glycine 31. At cysteine 32 to glycine 88 the chain is on the cytoplasmic side. Position 49 is a phosphoserine (serine 49).

Belongs to the stannin family. In terms of assembly, monomer.

It localises to the mitochondrion outer membrane. In terms of biological role, plays a role in the toxic effects of organotins. Plays a role in endosomal maturation. This is Stannin (SNN) from Homo sapiens (Human).